A 106-amino-acid chain; its full sequence is Large ribosomal subunit protein P2 (106 aa).

Positions 80–106 (AAAAPAKKVVEEKKEESDDDMGMGLFD) are disordered.

The protein belongs to the eukaryotic ribosomal protein P1/P2 family. In terms of assembly, P1 and P2 exist as dimers at the large ribosomal subunit. Post-translationally, phosphorylated.

Its function is as follows. Plays an important role in the elongation step of protein synthesis. The chain is Large ribosomal subunit protein P2 (rplp2) from Dictyostelium discoideum (Social amoeba).